The sequence spans 331 residues: Ribosomal large subunit pseudouridine synthase D (331 aa).

The S4 RNA-binding domain occupies 25 to 97 (RRFDAVLAEL…IPLNVLYEDD (73 aa)). The active site involves Asp-145.

The protein belongs to the pseudouridine synthase RluA family.

The protein resides in the cytoplasm. The catalysed reaction is uridine(1911/1915/1917) in 23S rRNA = pseudouridine(1911/1915/1917) in 23S rRNA. Responsible for synthesis of pseudouridine from uracil at positions 1911, 1915 and 1917 in 23S ribosomal RNA. The chain is Ribosomal large subunit pseudouridine synthase D (rluD) from Xanthomonas campestris pv. campestris (strain ATCC 33913 / DSM 3586 / NCPPB 528 / LMG 568 / P 25).